Here is a 448-residue protein sequence, read N- to C-terminus: Deoxyguanosinetriphosphate triphosphohydrolase-like protein (448 aa).

The disordered stretch occupies residues methionine 1 to arginine 26. Basic and acidic residues predominate over residues phenylalanine 11–arginine 26. The 214-residue stretch at arginine 59–alanine 272 folds into the HD domain.

This sequence belongs to the dGTPase family. Type 2 subfamily.

The polypeptide is Deoxyguanosinetriphosphate triphosphohydrolase-like protein (Histophilus somni (strain 129Pt) (Haemophilus somnus)).